Here is a 147-residue protein sequence, read N- to C-terminus: Arginine repressor (147 aa).

The protein belongs to the ArgR family.

It is found in the cytoplasm. It functions in the pathway amino-acid biosynthesis; L-arginine biosynthesis [regulation]. Regulates arginine biosynthesis genes. The polypeptide is Arginine repressor (Chlamydia caviae (strain ATCC VR-813 / DSM 19441 / 03DC25 / GPIC) (Chlamydophila caviae)).